A 179-amino-acid chain; its full sequence is Large ribosomal subunit protein uL5 (179 aa).

Belongs to the universal ribosomal protein uL5 family. As to quaternary structure, part of the 50S ribosomal subunit; part of the 5S rRNA/L5/L18/L25 subcomplex. Contacts the 5S rRNA and the P site tRNA. Forms a bridge to the 30S subunit in the 70S ribosome.

Functionally, this is one of the proteins that bind and probably mediate the attachment of the 5S RNA into the large ribosomal subunit, where it forms part of the central protuberance. In the 70S ribosome it contacts protein S13 of the 30S subunit (bridge B1b), connecting the 2 subunits; this bridge is implicated in subunit movement. Contacts the P site tRNA; the 5S rRNA and some of its associated proteins might help stabilize positioning of ribosome-bound tRNAs. This chain is Large ribosomal subunit protein uL5, found in Vibrio atlanticus (strain LGP32) (Vibrio splendidus (strain Mel32)).